An 87-amino-acid chain; its full sequence is uncharacterized protein (87 aa).

A helical membrane pass occupies residues D44–F64.

The protein belongs to the SPP1 holin family.

It is found in the membrane. This is an uncharacterized protein from Bacillus licheniformis.